The primary structure comprises 248 residues: Aquaporin TIP2-3 (248 aa).

The next 2 membrane-spanning stretches (helical) occupy residues 20-40 (AYVAEFIATLLFVFAGVGSAI) and 54-74 (AGLVAIAIAHAFALFVGVSMA). Positions 83-85 (NPA) match the NPA 1 motif. A run of 3 helical transmembrane segments spans residues 97–119 (TILTGILYWVAQLLGASVACFLL), 141–161 (GVVMEIVITFALVYTVYATAA), and 168–188 (LGTIAPMAIGFIVGANILAAG). Positions 196-198 (NPA) match the NPA 2 motif. A helical membrane pass occupies residues 217–237 (WVGPLVGGGLAGLVYGDVFIA).

The protein belongs to the MIP/aquaporin (TC 1.A.8) family. TIP (TC 1.A.8.10) subfamily. In terms of tissue distribution, specifically expressed in roots.

Its subcellular location is the cell membrane. Water channel required to facilitate the transport of water across cell membrane. This is Aquaporin TIP2-3 (TIP2-3) from Zea mays (Maize).